Reading from the N-terminus, the 29-residue chain is Galanin (29 aa).

An Alanine amide modification is found at alanine 29.

It belongs to the galanin family.

Its subcellular location is the secreted. Functionally, contracts smooth muscle of the gastrointestinal and genitourinary tract, regulates growth hormone release, modulates insulin release, and may be involved in the control of adrenal secretion. This chain is Galanin (gal), found in Amia calva (Bowfin).